The chain runs to 77 residues: Dermaseptin-B9 (77 aa).

An N-terminal signal peptide occupies residues 1-22 (MAFLKKSLFLVLFLGLVSLSVC). 2 propeptides span residues 23–43 (EEEK…QSEE) and 76–77 (EQ).

Belongs to the frog skin active peptide (FSAP) family. Dermaseptin subfamily. In terms of tissue distribution, expressed by the skin glands.

It is found in the secreted. In terms of biological role, has antimicrobial activity. Exhibits a bactericidal activity towards several species of mollicutes, firmicutes and gracilicutes. This peptide is membranotropic and it efficiently depolarizes the plasma membrane. The protein is Dermaseptin-B9 (DRG3) of Phyllomedusa bicolor (Two-colored leaf frog).